The sequence spans 313 residues: Ribosomal RNA small subunit methyltransferase H (313 aa).

S-adenosyl-L-methionine-binding positions include 33–35 (AGH), D53, F82, D103, and Q110.

This sequence belongs to the methyltransferase superfamily. RsmH family.

The protein localises to the cytoplasm. It carries out the reaction cytidine(1402) in 16S rRNA + S-adenosyl-L-methionine = N(4)-methylcytidine(1402) in 16S rRNA + S-adenosyl-L-homocysteine + H(+). Specifically methylates the N4 position of cytidine in position 1402 (C1402) of 16S rRNA. This is Ribosomal RNA small subunit methyltransferase H from Ruminiclostridium cellulolyticum (strain ATCC 35319 / DSM 5812 / JCM 6584 / H10) (Clostridium cellulolyticum).